The sequence spans 619 residues: DNA mismatch repair protein MutL (619 aa).

Residues 339 to 400 (AEKDDPPAPR…GGASWPHAQP (62 aa)) form a disordered region.

This sequence belongs to the DNA mismatch repair MutL/HexB family.

Functionally, this protein is involved in the repair of mismatches in DNA. It is required for dam-dependent methyl-directed DNA mismatch repair. May act as a 'molecular matchmaker', a protein that promotes the formation of a stable complex between two or more DNA-binding proteins in an ATP-dependent manner without itself being part of a final effector complex. This is DNA mismatch repair protein MutL from Klebsiella pneumoniae subsp. pneumoniae (strain ATCC 700721 / MGH 78578).